The chain runs to 637 residues: DNA gyrase subunit B (637 aa).

The region spanning 421–535 (SEIYIVEGDS…HGYVYIAQPP (115 aa)) is the Toprim domain. The Mg(2+) site is built by glutamate 427, aspartate 500, and aspartate 502.

This sequence belongs to the type II topoisomerase GyrB family. As to quaternary structure, heterotetramer, composed of two GyrA and two GyrB chains. In the heterotetramer, GyrA contains the active site tyrosine that forms a transient covalent intermediate with DNA, while GyrB binds cofactors and catalyzes ATP hydrolysis. Requires Mg(2+) as cofactor. The cofactor is Mn(2+). It depends on Ca(2+) as a cofactor.

The protein resides in the cytoplasm. It carries out the reaction ATP-dependent breakage, passage and rejoining of double-stranded DNA.. Functionally, a type II topoisomerase that negatively supercoils closed circular double-stranded (ds) DNA in an ATP-dependent manner to modulate DNA topology and maintain chromosomes in an underwound state. Negative supercoiling favors strand separation, and DNA replication, transcription, recombination and repair, all of which involve strand separation. Also able to catalyze the interconversion of other topological isomers of dsDNA rings, including catenanes and knotted rings. Type II topoisomerases break and join 2 DNA strands simultaneously in an ATP-dependent manner. This Halalkalibacterium halodurans (strain ATCC BAA-125 / DSM 18197 / FERM 7344 / JCM 9153 / C-125) (Bacillus halodurans) protein is DNA gyrase subunit B.